Here is an 835-residue protein sequence, read N- to C-terminus: Cap-specific mRNA (nucleoside-2'-O-)-methyltransferase 1 (835 aa).

A disordered region spans residues 1 to 66 (MKRRNDSECT…TEGKQRSSDS (66 aa)). Positions 2–19 (KRRNDSECTAPLKKQKKR) match the Bipartite nuclear localization signal motif. Residues S28, S31, S53, S66, and S91 each carry the phosphoserine modification. Basic and acidic residues predominate over residues 57–66 (TEGKQRSSDS). The region spanning 87–133 (YNSVSQKLMAKMGFKEGEGLGKYSQGRKDIVEASNQKGRRGLGLTLQ) is the G-patch domain. N6-acetyllysine is present on K108. Substrate-binding positions include 203-207 (KSVFD) and R218. Positions 231–450 (FFLNRAAMKM…ERYVVCKGLK (220 aa)) constitute a RrmJ-type SAM-dependent 2'-O-MTase domain. N234 serves as a coordination point for S-adenosyl-L-methionine. K239 is an active-site residue. S-adenosyl-L-methionine contacts are provided by residues 277–283 (CAGPGGF) and 335–336 (DI). D364 is an active-site residue. 374–376 (NLQ) is a substrate binding site. K404 serves as the catalytic Proton acceptor. Residue N439 participates in substrate binding. Residues 727–835 (SSGTPKLSYT…VLSFIQTHSA (109 aa)) are interaction with POLR2A. Residues 752-786 (RTVNEPWTMGFSKSFKRKFFYNKKTKNSTFDLPAD) enclose the WW domain.

In terms of assembly, interacts with POLR2A (via C-terminus).

Its subcellular location is the nucleus. The enzyme catalyses a 5'-end (N(7)-methyl 5'-triphosphoguanosine)-ribonucleoside in mRNA + S-adenosyl-L-methionine = a 5'-end (N(7)-methyl 5'-triphosphoguanosine)-(2'-O-methyl-ribonucleoside) in mRNA + S-adenosyl-L-homocysteine + H(+). S-adenosyl-L-methionine-dependent methyltransferase that mediates mRNA cap1 2'-O-ribose methylation to the 5'-cap structure of mRNAs. Methylates the ribose of the first nucleotide of a m(7)GpppG-capped mRNA and small nuclear RNA (snRNA) to produce m(7)GpppRm (cap1). Displays a preference for cap0 transcripts. Cap1 modification is linked to higher levels of translation. May be involved in the interferon response pathway. The polypeptide is Cap-specific mRNA (nucleoside-2'-O-)-methyltransferase 1 (CMTR1) (Bos taurus (Bovine)).